The chain runs to 273 residues: Dermonecrotic toxin LdSicTox-alphaIB1av (273 aa).

Residue His-5 is part of the active site. The Mg(2+) site is built by Glu-25 and Asp-27. The active-site Nucleophile is His-41. Disulfide bonds link Cys-45–Cys-51 and Cys-47–Cys-190. Asp-85 is a binding site for Mg(2+). The N-linked (GlcNAc...) asparagine glycan is linked to Asn-250.

Belongs to the arthropod phospholipase D family. Class II subfamily. Mg(2+) serves as cofactor. In terms of tissue distribution, expressed by the venom gland.

The protein localises to the secreted. The enzyme catalyses an N-(acyl)-sphingosylphosphocholine = an N-(acyl)-sphingosyl-1,3-cyclic phosphate + choline. The catalysed reaction is an N-(acyl)-sphingosylphosphoethanolamine = an N-(acyl)-sphingosyl-1,3-cyclic phosphate + ethanolamine. It catalyses the reaction a 1-acyl-sn-glycero-3-phosphocholine = a 1-acyl-sn-glycero-2,3-cyclic phosphate + choline. It carries out the reaction a 1-acyl-sn-glycero-3-phosphoethanolamine = a 1-acyl-sn-glycero-2,3-cyclic phosphate + ethanolamine. Functionally, dermonecrotic toxins cleave the phosphodiester linkage between the phosphate and headgroup of certain phospholipids (sphingolipid and lysolipid substrates), forming an alcohol (often choline) and a cyclic phosphate. This toxin acts on sphingomyelin (SM). It may also act on ceramide phosphoethanolamine (CPE), lysophosphatidylcholine (LPC) and lysophosphatidylethanolamine (LPE), but not on lysophosphatidylserine (LPS), and lysophosphatidylglycerol (LPG). It acts by transphosphatidylation, releasing exclusively cyclic phosphate products as second products. Induces dermonecrosis, hemolysis, increased vascular permeability, edema, inflammatory response, and platelet aggregation. This is Dermonecrotic toxin LdSicTox-alphaIB1av from Loxosceles deserta (Desert recluse spider).